Consider the following 792-residue polypeptide: Phenylalanine--tRNA ligase beta subunit (792 aa).

Positions 38–148 (NTKLAGFIVA…DDYKVGNKFF (111 aa)) constitute a tRNA-binding domain. One can recognise a B5 domain in the interval 406-482 (EADTKVSFDY…RIYGYDKIKE (77 aa)). Asp-460, Asp-466, Glu-469, and Glu-470 together coordinate Mg(2+). One can recognise an FDX-ACB domain in the interval 698–790 (YKHQSVKRDF…VHKNTGGILR (93 aa)).

The protein belongs to the phenylalanyl-tRNA synthetase beta subunit family. Type 1 subfamily. In terms of assembly, tetramer of two alpha and two beta subunits. Requires Mg(2+) as cofactor.

The protein localises to the cytoplasm. It carries out the reaction tRNA(Phe) + L-phenylalanine + ATP = L-phenylalanyl-tRNA(Phe) + AMP + diphosphate + H(+). The protein is Phenylalanine--tRNA ligase beta subunit of Wolbachia sp. subsp. Brugia malayi (strain TRS).